Reading from the N-terminus, the 1131-residue chain is Phytochrome (1131 aa).

A disordered region spans residues 1-30 (MASNSRHTQSQSTGSNNRRSSTNTNTTTNK). The segment covering 9–29 (QSQSTGSNNRRSSTNTNTTTN) has biased composition (low complexity). A GAF domain is found at 227-406 (DVGLLCDTVV…ALGLQLNMEL (180 aa)). Cys332 provides a ligand contact to phytochromobilin. PAS domains are found at residues 621–692 (VASE…LRGE) and 755–826 (DYRS…TIVL). Residues 903-1123 (YIRQEIKNPL…LVNVEFPMAQ (221 aa)) form the Histidine kinase domain.

The protein belongs to the phytochrome family. Homodimer. Contains one covalently linked phytochromobilin chromophore.

In terms of biological role, regulatory photoreceptor which exists in two forms that are reversibly interconvertible by light: the Pr form that absorbs maximally in the red region of the spectrum and the Pfr form that absorbs maximally in the far-red region. Photoconversion of Pr to Pfr induces an array of morphogenic responses, whereas reconversion of Pfr to Pr cancels the induction of those responses. Pfr controls the expression of a number of nuclear genes including those encoding the small subunit of ribulose-bisphosphate carboxylase, chlorophyll A/B binding protein, protochlorophyllide reductase, rRNA, etc. It also controls the expression of its own gene(s) in a negative feedback fashion. This Pinus sylvestris (Scotch pine) protein is Phytochrome.